The sequence spans 311 residues: uncharacterized protein (311 aa).

A helical transmembrane segment spans residues 168-188 (FNVMKGAILGLPIIGGIIVGV).

It is found in the cell membrane. This is an uncharacterized protein from Edwardsiella tarda.